Here is a 768-residue protein sequence, read N- to C-terminus: DNA replication licensing factor MCM3 homolog 2 (768 aa).

Residues 290 to 497 (TFDLLGNSLA…IDRQISEHVA (208 aa)) enclose the MCM domain. Residue 340–347 (GDPSVAKS) coordinates ATP. Residues 472–475 (SRFD) carry the Arginine finger motif. A compositionally biased stretch (basic and acidic residues) spans 661–670 (EMKQQADHDA). The segment at 661-689 (EMKQQADHDAGATGGTVDGHGSSGNDPMD) is disordered. A compositionally biased stretch (gly residues) spans 672–682 (ATGGTVDGHGS).

The protein belongs to the MCM family.

It localises to the nucleus. The catalysed reaction is ATP + H2O = ADP + phosphate + H(+). Its function is as follows. Acts as a factor that allows the DNA to undergo a single round of replication per cell cycle. Required for DNA replication and cell proliferation. May act as a component of the MCM complex which is the putative replicative helicase of the replication licensing system in eukaryotic cells. In Zea mays (Maize), this protein is DNA replication licensing factor MCM3 homolog 2 (ROA2).